Here is a 121-residue protein sequence, read N- to C-terminus: Large ribosomal subunit protein uL24 (121 aa).

This sequence belongs to the universal ribosomal protein uL24 family. Part of the 50S ribosomal subunit.

In terms of biological role, one of two assembly initiator proteins, it binds directly to the 5'-end of the 23S rRNA, where it nucleates assembly of the 50S subunit. Functionally, located at the polypeptide exit tunnel on the outside of the subunit. The polypeptide is Large ribosomal subunit protein uL24 (Pyrococcus furiosus (strain ATCC 43587 / DSM 3638 / JCM 8422 / Vc1)).